Reading from the N-terminus, the 746-residue chain is Exostosin-1 (746 aa).

Residues M1–Y7 lie on the Cytoplasmic side of the membrane. A helical; Signal-anchor for type II membrane protein transmembrane segment spans residues F8–F28. Over R29 to L746 the chain is Lumenal. Residue N89 is glycosylated (N-linked (GlcNAc...) asparagine). 2 disulfide bridges follow: C98/C103 and C109/C152. A protein is bound by residues L166 and Y203. K267, K269, Y271, and R280 together coordinate UDP. Cysteines 298 and 312 form a disulfide. H300 serves as a coordination point for a protein. UDP-binding residues include Y319 and Y324. N330 is a glycosylation site (N-linked (GlcNAc...) asparagine). Intrachain disulfides connect C334–C355 and C652–C704. UDP-binding residues include R346 and E349.

This sequence belongs to the glycosyltransferase 47 family. In terms of assembly, part of the heparan sulfate polymerase, a dimeric complex composed of EXT1 and EXT2. Could also form homooligomeric complexes. Interacts with NDST1. In terms of processing, N-glycosylated.

It localises to the golgi apparatus membrane. It is found in the golgi apparatus. The protein resides in the cis-Golgi network membrane. Its subcellular location is the endoplasmic reticulum membrane. The catalysed reaction is 3-O-{alpha-D-GlcNAc-[(1-&gt;4)-beta-D-GlcA-(1-&gt;4)-alpha-D-GlcNAc](n)-(1-&gt;4)-beta-D-GlcA-(1-&gt;3)-beta-D-Gal-(1-&gt;3)-beta-D-Gal-(1-&gt;4)-beta-D-Xyl}-L-seryl-[protein] + UDP-alpha-D-glucuronate = 3-O-{[(1-&gt;4)-beta-D-GlcA-(1-&gt;4)-alpha-D-GlcNAc](n+1)-(1-&gt;4)-beta-D-GlcA-(1-&gt;3)-beta-D-Gal-(1-&gt;3)-beta-D-Gal-(1-&gt;4)-beta-D-Xyl}-L-seryl-[protein] + UDP + H(+). It participates in protein modification; protein glycosylation. In terms of biological role, glycosyltransferase forming with EXT2 the heterodimeric heparan sulfate polymerase which catalyzes the elongation of the heparan sulfate glycan backbone. Glycan backbone extension consists in the alternating transfer of (1-&gt;4)-beta-D-GlcA and (1-&gt;4)-alpha-D-GlcNAc residues from their respective UDP-sugar donors. Both EXT1 and EXT2 are required for the full activity of the polymerase since EXT1 bears the N-acetylglucosaminyl-proteoglycan 4-beta-glucuronosyltransferase activity within the complex while EXT2 carries the glucuronosyl-N-acetylglucosaminyl-proteoglycan 4-alpha-N-acetylglucosaminyltransferase activity. Heparan sulfate proteoglycans are ubiquitous components of the extracellular matrix and play an important role in tissue homeostasis and signaling. The chain is Exostosin-1 (EXT1) from Papio anubis (Olive baboon).